Consider the following 405-residue polypeptide: FK506-binding protein 4 (405 aa).

Disordered regions lie at residues 49 to 117 and 164 to 297; these read THNP…EDEL and QQDE…PQKK. Composition is skewed to acidic residues over residues 59-84, 98-117, and 165-201; these read ESDD…EMEV, VEEE…EDEL, and QDED…EEEA. Composition is skewed to basic and acidic residues over residues 238–252 and 265–276; these read RKAE…EDAA and AKVEGEKAEEKP. In terms of domain architecture, PPIase FKBP-type spans 319–405; it reads GKRLGMRYIG…KFDVKLVSIN (87 aa).

The protein belongs to the FKBP-type PPIase family. FKBP3/4 subfamily. As to quaternary structure, binds to histones H3 and H4.

It localises to the nucleus. It carries out the reaction [protein]-peptidylproline (omega=180) = [protein]-peptidylproline (omega=0). Its activity is regulated as follows. Inhibited by both FK506 and rapamycin. PPIase that acts as a histone chaperone. Histone proline isomerase that increases the rate of cis-trans isomerization at prolines on the histone H3 N-terminal tail. Proline isomerization influences H3 methylation thereby regulating gene expression. This Cryptococcus neoformans var. neoformans serotype D (strain B-3501A) (Filobasidiella neoformans) protein is FK506-binding protein 4 (FPR4).